A 135-amino-acid chain; its full sequence is Fluoride-specific ion channel FluC (135 aa).

4 helical membrane-spanning segments follow: residues 7–27 (IAAISLGASLGALARYGLGLA), 37–57 (IGTLAANLIAAYVVGVTIAYV), 70–90 (FMITGLAGGLSTFSTFTAELF), and 105–125 (LGLHVGGSLALLMLGMLTIGL). Positions 77 and 80 each coordinate Na(+).

This sequence belongs to the fluoride channel Fluc/FEX (TC 1.A.43) family.

The protein resides in the cell inner membrane. The catalysed reaction is fluoride(in) = fluoride(out). With respect to regulation, na(+) is not transported, but it plays an essential structural role and its presence is essential for fluoride channel function. In terms of biological role, fluoride-specific ion channel. Important for reducing fluoride concentration in the cell, thus reducing its toxicity. The polypeptide is Fluoride-specific ion channel FluC (Xanthomonas oryzae pv. oryzae (strain MAFF 311018)).